Reading from the N-terminus, the 210-residue chain is Probable GTP-binding protein EngB (210 aa).

In terms of domain architecture, EngB-type G spans 25-199 (CGIEVAFAGR…RQKLDSWFSE (175 aa)). GTP is bound by residues 33 to 40 (GRSNAGKS), 60 to 64 (GRTQL), 78 to 81 (DLPG), 145 to 148 (TKAD), and 178 to 180 (FSS). Mg(2+) contacts are provided by Ser40 and Thr62.

The protein belongs to the TRAFAC class TrmE-Era-EngA-EngB-Septin-like GTPase superfamily. EngB GTPase family. Requires Mg(2+) as cofactor.

Necessary for normal cell division and for the maintenance of normal septation. This is Probable GTP-binding protein EngB from Salmonella agona (strain SL483).